Consider the following 191-residue polypeptide: Imidazoleglycerol-phosphate dehydratase (191 aa).

This sequence belongs to the imidazoleglycerol-phosphate dehydratase family.

The protein localises to the cytoplasm. The catalysed reaction is D-erythro-1-(imidazol-4-yl)glycerol 3-phosphate = 3-(imidazol-4-yl)-2-oxopropyl phosphate + H2O. The protein operates within amino-acid biosynthesis; L-histidine biosynthesis; L-histidine from 5-phospho-alpha-D-ribose 1-diphosphate: step 6/9. The protein is Imidazoleglycerol-phosphate dehydratase of Methanococcoides burtonii (strain DSM 6242 / NBRC 107633 / OCM 468 / ACE-M).